Here is a 443-residue protein sequence, read N- to C-terminus: Xaa-Pro dipeptidase (443 aa).

Mn(2+) is bound by residues aspartate 246, aspartate 257, histidine 339, glutamate 384, and glutamate 423.

Belongs to the peptidase M24B family. Bacterial-type prolidase subfamily. Mn(2+) serves as cofactor.

It carries out the reaction Xaa-L-Pro dipeptide + H2O = an L-alpha-amino acid + L-proline. Splits dipeptides with a prolyl residue in the C-terminal position. This Citrobacter koseri (strain ATCC BAA-895 / CDC 4225-83 / SGSC4696) protein is Xaa-Pro dipeptidase.